The primary structure comprises 398 residues: Dual-specificity RNA methyltransferase RlmN (398 aa).

Glu119 (proton acceptor) is an active-site residue. Residues 125–364 (EADRATLCVS…TIVRKTRGDD (240 aa)) form the Radical SAM core domain. Cys132 and Cys369 form a disulfide bridge. [4Fe-4S] cluster contacts are provided by Cys139, Cys143, and Cys146. S-adenosyl-L-methionine contacts are provided by residues 193 to 194 (GE), Ser225, 247 to 249 (SLH), and Asn326. The active-site S-methylcysteine intermediate is Cys369.

The protein belongs to the radical SAM superfamily. RlmN family. [4Fe-4S] cluster serves as cofactor.

Its subcellular location is the cytoplasm. It catalyses the reaction adenosine(2503) in 23S rRNA + 2 reduced [2Fe-2S]-[ferredoxin] + 2 S-adenosyl-L-methionine = 2-methyladenosine(2503) in 23S rRNA + 5'-deoxyadenosine + L-methionine + 2 oxidized [2Fe-2S]-[ferredoxin] + S-adenosyl-L-homocysteine. The enzyme catalyses adenosine(37) in tRNA + 2 reduced [2Fe-2S]-[ferredoxin] + 2 S-adenosyl-L-methionine = 2-methyladenosine(37) in tRNA + 5'-deoxyadenosine + L-methionine + 2 oxidized [2Fe-2S]-[ferredoxin] + S-adenosyl-L-homocysteine. Functionally, specifically methylates position 2 of adenine 2503 in 23S rRNA and position 2 of adenine 37 in tRNAs. m2A2503 modification seems to play a crucial role in the proofreading step occurring at the peptidyl transferase center and thus would serve to optimize ribosomal fidelity. The polypeptide is Dual-specificity RNA methyltransferase RlmN (Yersinia pestis).